The primary structure comprises 172 residues: Bifunctional protein PyrR (172 aa).

Residues 90–102 (LVLIDDVLMSGRT) carry the PRPP-binding motif.

The protein belongs to the purine/pyrimidine phosphoribosyltransferase family. PyrR subfamily.

It catalyses the reaction UMP + diphosphate = 5-phospho-alpha-D-ribose 1-diphosphate + uracil. Its function is as follows. Regulates the transcription of the pyrimidine nucleotide (pyr) operon in response to exogenous pyrimidines. In terms of biological role, also displays a weak uracil phosphoribosyltransferase activity which is not physiologically significant. This is Bifunctional protein PyrR from Pseudomonas putida (strain W619).